The primary structure comprises 309 residues: Malate dehydrogenase (309 aa).

Residues 6-11 (GSGRVG) and Asp31 contribute to the NAD(+) site. Positions 80 and 86 each coordinate substrate. NAD(+) contacts are provided by residues Asn93 and 116-118 (TTN). Residues Asn118 and Arg149 each contribute to the substrate site. The active-site Proton acceptor is His173.

The protein belongs to the LDH/MDH superfamily. In terms of assembly, homotetramer.

It carries out the reaction (S)-malate + NAD(+) = oxaloacetate + NADH + H(+). Its function is as follows. Catalyzes the reversible oxidation of malate to oxaloacetate. Exhibits higher specific activity for oxaloacetate reduction than for malate oxidation in vitro. Has a strong preference for NAD. Can use NADPH for oxaloacetate reduction, but activity decreases more than 90%. No activity detected with NADP(+) and malate. The sequence is that of Malate dehydrogenase from Pyrobaculum islandicum (strain DSM 4184 / JCM 9189 / GEO3).